The following is a 249-amino-acid chain: Probable septum site-determining protein MinC (249 aa).

Residues 89–130 (SLFEPGMPPAMKGGRPAPDFEVPEVDPADPPKAGKGKAAAPI) are disordered. Residues 119-129 (PKAGKGKAAAP) are compositionally biased toward low complexity.

This sequence belongs to the MinC family. Interacts with MinD and FtsZ.

In terms of biological role, cell division inhibitor that blocks the formation of polar Z ring septums. Rapidly oscillates between the poles of the cell to destabilize FtsZ filaments that have formed before they mature into polar Z rings. Prevents FtsZ polymerization. The sequence is that of Probable septum site-determining protein MinC from Rhizobium meliloti (strain 1021) (Ensifer meliloti).